Reading from the N-terminus, the 186-residue chain is MSKKSRISITHLLNPIQEENLKEKLQEINNQLISLCSSLPKRQSLPGPSSDILRFLSRNNLDPQEIGLIKTTYRLSTLLSKLREHEIVFNVVTKDHLLKKGVPNHYAASYRGHRFTRENVQILETWYRNHIDNPYLDHNSQQYLAQKTNLSKIQIKNWVANRRRKQKSIYISPFRPTLMAQNSLDT.

The segment at residues 108-170 is a DNA-binding region (homeobox; TALE-type); the sequence is ASYRGHRFTR…NRRRKQKSIY (63 aa).

Belongs to the TALE/M-ATYP homeobox family.

It is found in the nucleus. In terms of biological role, mating type proteins are sequence specific DNA-binding proteins that act as master switches in yeast differentiation by controlling gene expression in a cell type-specific fashion. The sequence is that of Mating-type-like protein ALPHA2 (MTL1ALPHA2) from Candida glabrata (strain ATCC 2001 / BCRC 20586 / JCM 3761 / NBRC 0622 / NRRL Y-65 / CBS 138) (Yeast).